Reading from the N-terminus, the 644-residue chain is Chaperone protein DnaK (644 aa).

Phosphothreonine; by autocatalysis is present on Thr200. Residues 603–644 are disordered; the sequence is VMAAEQAKSGGAAPGAAPGGAQQAAPDADVVDADFKEVDDKK. Residues 612-630 are compositionally biased toward low complexity; sequence GGAAPGAAPGGAQQAAPDA. Residues 635 to 644 show a composition bias toward basic and acidic residues; that stretch reads ADFKEVDDKK.

The protein belongs to the heat shock protein 70 family.

Acts as a chaperone. The chain is Chaperone protein DnaK from Polynucleobacter asymbioticus (strain DSM 18221 / CIP 109841 / QLW-P1DMWA-1) (Polynucleobacter necessarius subsp. asymbioticus).